A 602-amino-acid chain; its full sequence is Threonine--tRNA ligase (602 aa).

The catalytic stretch occupies residues 208-499 (DHRKLGTELK…LTEHCAGEFP (292 aa)). Positions 300, 351, and 476 each coordinate Zn(2+).

This sequence belongs to the class-II aminoacyl-tRNA synthetase family. As to quaternary structure, homodimer. It depends on Zn(2+) as a cofactor.

It localises to the cytoplasm. The enzyme catalyses tRNA(Thr) + L-threonine + ATP = L-threonyl-tRNA(Thr) + AMP + diphosphate + H(+). Catalyzes the attachment of threonine to tRNA(Thr) in a two-step reaction: L-threonine is first activated by ATP to form Thr-AMP and then transferred to the acceptor end of tRNA(Thr). Also edits incorrectly charged L-seryl-tRNA(Thr). This Campylobacter jejuni (strain RM1221) protein is Threonine--tRNA ligase.